The sequence spans 335 residues: Beta-ketoacyl-[acyl-carrier-protein] synthase III (335 aa).

Residues Cys119 and His261 contribute to the active site. Positions 262–266 (QANQR) are ACP-binding. Residue Asn291 is part of the active site.

Belongs to the thiolase-like superfamily. FabH family. As to quaternary structure, homodimer.

Its subcellular location is the cytoplasm. It catalyses the reaction malonyl-[ACP] + acetyl-CoA + H(+) = 3-oxobutanoyl-[ACP] + CO2 + CoA. The protein operates within lipid metabolism; fatty acid biosynthesis. Its function is as follows. Catalyzes the condensation reaction of fatty acid synthesis by the addition to an acyl acceptor of two carbons from malonyl-ACP. Catalyzes the first condensation reaction which initiates fatty acid synthesis and may therefore play a role in governing the total rate of fatty acid production. Possesses both acetoacetyl-ACP synthase and acetyl transacylase activities. Its substrate specificity determines the biosynthesis of branched-chain and/or straight-chain of fatty acids. The polypeptide is Beta-ketoacyl-[acyl-carrier-protein] synthase III (Prochlorococcus marinus (strain MIT 9515)).